A 231-amino-acid polypeptide reads, in one-letter code: RIQAYRFRTRVPPSPAASGSPRSTRRDVAVQAKGSWLPGLQSPAYLDGSLEGDNGFDPLALAEDPEDLRWFVQADVVNGRWAMLGVAGMLIPEVLTKAGLMNAPEWLRLPGKETYFASSSTALRVHMSSTYVEIRRWQDIKNPGSVNQDPIFKSYSLPPHECGYPGRVFNPLNFAPLENKEKELANGRLAMLAFLGFLVQHNVHGKGPFENLQQHLADPWHNTIIQTISGQ.

Residues 1–25 form a disordered region; sequence RIQAYRFRTRVPPSPAASGSPRSTR. Residues 1 to 31 constitute a chloroplast transit peptide; the sequence is RIQAYRFRTRVPPSPAASGSPRSTRRDVAVQ. Tryptophan 36 is a binding site for chlorophyll b. Phenylalanine 56 contacts chlorophyll a. Chlorophyll b contacts are provided by arginine 80, serine 118, glutamate 133, and arginine 136. Residues lysine 182, glutamate 183, asparagine 186, arginine 188, glutamine 200, and histidine 215 each coordinate chlorophyll a. Residues 183–199 traverse the membrane as a helical segment; that stretch reads ELANGRLAMLAFLGFLV.

Belongs to the light-harvesting chlorophyll a/b-binding (LHC) protein family. The LHC complex consists of chlorophyll a-b binding proteins. The cofactor is Binds at least 14 chlorophylls (8 Chl-a and 6 Chl-b) and carotenoids such as lutein and neoxanthin.. Post-translationally, photoregulated by reversible phosphorylation of its threonine residues.

Its subcellular location is the plastid. It is found in the chloroplast thylakoid membrane. Functionally, the light-harvesting complex (LHC) functions as a light receptor, it captures and delivers excitation energy to photosystems with which it is closely associated. The polypeptide is Chlorophyll a-b binding protein 1B-20, chloroplastic (LHC Ib-20) (Hordeum vulgare (Barley)).